Reading from the N-terminus, the 61-residue chain is Alpha-conotoxin-like Sm1.1 (61 aa).

The first 16 residues, 1 to 16, serve as a signal peptide directing secretion; sequence MFTVFLLVVLATTVVS. A propeptide spanning residues 17-43 is cleaved from the precursor; it reads FPSDRASDGRDDEAKDERSDMHESGRK. A disordered region spans residues 19-46; that stretch reads SDRASDGRDDEAKDERSDMHESGRKGRG. Residues 21–42 are compositionally biased toward basic and acidic residues; it reads RASDGRDDEAKDERSDMHESGR. Disulfide bonds link Cys-48–Cys-53 and Cys-49–Cys-59. Pro-55 is modified (4-hydroxyproline; partial). Cys-59 carries the cysteine amide modification.

The protein belongs to the conotoxin A superfamily. As to expression, expressed by the venom duct.

It is found in the secreted. In terms of biological role, alpha-conotoxins act on postsynaptic membranes, they bind to the nicotinic acetylcholine receptors (nAChR) and thus inhibit them. This is Alpha-conotoxin-like Sm1.1 from Conus stercusmuscarum (Fly-specked cone).